We begin with the raw amino-acid sequence, 67 residues long: uncharacterized protein (67 aa).

Transmembrane regions (helical) follow at residues 6–26 and 38–58; these read GQLWIVFMWVSGVVCGICVLM and NNIIIIIIIIMMIKIMKIIII.

The protein resides in the membrane. This is an uncharacterized protein from Dictyostelium discoideum (Social amoeba).